The following is a 389-amino-acid chain: Succinate--CoA ligase [ADP-forming] subunit beta (389 aa).

Residues 9-236 (RDMFEAHGVP…KDAADPLEAK (228 aa)) enclose the ATP-grasp domain. Residues K45, 52–54 (GRG), A94, and E99 contribute to the ATP site. N191 and D205 together coordinate Mg(2+). Substrate-binding positions include N256 and 318–320 (GIT).

The protein belongs to the succinate/malate CoA ligase beta subunit family. Heterotetramer of two alpha and two beta subunits. The cofactor is Mg(2+).

It catalyses the reaction succinate + ATP + CoA = succinyl-CoA + ADP + phosphate. It carries out the reaction GTP + succinate + CoA = succinyl-CoA + GDP + phosphate. It functions in the pathway carbohydrate metabolism; tricarboxylic acid cycle; succinate from succinyl-CoA (ligase route): step 1/1. Succinyl-CoA synthetase functions in the citric acid cycle (TCA), coupling the hydrolysis of succinyl-CoA to the synthesis of either ATP or GTP and thus represents the only step of substrate-level phosphorylation in the TCA. The beta subunit provides nucleotide specificity of the enzyme and binds the substrate succinate, while the binding sites for coenzyme A and phosphate are found in the alpha subunit. This chain is Succinate--CoA ligase [ADP-forming] subunit beta, found in Pseudarthrobacter chlorophenolicus (strain ATCC 700700 / DSM 12829 / CIP 107037 / JCM 12360 / KCTC 9906 / NCIMB 13794 / A6) (Arthrobacter chlorophenolicus).